The following is a 205-amino-acid chain: Ras-related protein Rab-4 (205 aa).

Residue 14-22 (GSQSVGKSC) coordinates GTP. The short motif at 36–44 (STHTIGVDF) is the Effector region element. Residues 62–66 (DTAGQ), 120–123 (NKAD), and 150–152 (SAL) each bind GTP. 2 S-geranylgeranyl cysteine lipidation sites follow: cysteine 203 and cysteine 205. Cysteine 205 carries the post-translational modification Cysteine methyl ester.

The protein belongs to the small GTPase superfamily. Rab family.

It localises to the cell membrane. Its function is as follows. Protein transport. Probably involved in vesicular traffic. The sequence is that of Ras-related protein Rab-4 (rab4) from Dictyostelium discoideum (Social amoeba).